A 437-amino-acid polypeptide reads, in one-letter code: Lipid II isoglutaminyl synthase (glutamine-hydrolyzing) subunit MurT (437 aa).

Zn(2+) is bound by residues Cys-202, Cys-205, Cys-224, and Cys-226. The active site involves Asp-349.

This sequence belongs to the MurCDEF family. MurT subfamily. In terms of assembly, forms a heterodimer with GatD.

The catalysed reaction is beta-D-GlcNAc-(1-&gt;4)-Mur2Ac(oyl-L-Ala-gamma-D-Glu-L-Lys-D-Ala-D-Ala)-di-trans,octa-cis-undecaprenyl diphosphate + L-glutamine + ATP + H2O = beta-D-GlcNAc-(1-&gt;4)-Mur2Ac(oyl-L-Ala-D-isoglutaminyl-L-Lys-D-Ala-D-Ala)-di-trans,octa-cis-undecaprenyl diphosphate + L-glutamate + ADP + phosphate + H(+). It catalyses the reaction beta-D-GlcNAc-(1-&gt;4)-Mur2Ac(oyl-L-Ala-gamma-D-Glu-L-Lys-D-Ala-D-Ala)-di-trans,octa-cis-undecaprenyl diphosphate + ATP = beta-D-GlcNAc-(1-&gt;4)-Mur2Ac(oyl-L-Ala-gamma-D-O-P-Glu-L-Lys-D-Ala-D-Ala)-di-trans,octa-cis-undecaprenyl diphosphate + ADP. It carries out the reaction beta-D-GlcNAc-(1-&gt;4)-Mur2Ac(oyl-L-Ala-gamma-D-O-P-Glu-L-Lys-D-Ala-D-Ala)-di-trans,octa-cis-undecaprenyl diphosphate + NH4(+) = beta-D-GlcNAc-(1-&gt;4)-Mur2Ac(oyl-L-Ala-D-isoglutaminyl-L-Lys-D-Ala-D-Ala)-di-trans,octa-cis-undecaprenyl diphosphate + phosphate + H(+). The protein operates within cell wall biogenesis; peptidoglycan biosynthesis. In terms of biological role, the lipid II isoglutaminyl synthase complex catalyzes the formation of alpha-D-isoglutamine in the cell wall lipid II stem peptide. The MurT subunit catalyzes the ATP-dependent amidation of D-glutamate residue of lipid II, converting it to an isoglutamine residue. This is Lipid II isoglutaminyl synthase (glutamine-hydrolyzing) subunit MurT from Staphylococcus aureus (strain COL).